A 145-amino-acid chain; its full sequence is UPF0735 ACT domain-containing protein CKL_0858 (145 aa).

The 76-residue stretch at 69–144 folds into the ACT domain; the sequence is TLGLTLAHKA…SVIKVNLAAV (76 aa).

Belongs to the UPF0735 family.

The polypeptide is UPF0735 ACT domain-containing protein CKL_0858 (Clostridium kluyveri (strain ATCC 8527 / DSM 555 / NBRC 12016 / NCIMB 10680 / K1)).